The following is a 132-amino-acid chain: MSMQDPIADMFTRIRNGLSAEKEVVSVPFSKMKMEIANFLVNEGYIKGCSKGTTLAGHPSIEIELKYHAGAPVIEMIKRVSRPSLRIYKSHEELPKVYGGFGVAIISTSKGLVSDRKARDLGVGGEIIGYVA.

It belongs to the universal ribosomal protein uS8 family. As to quaternary structure, part of the 30S ribosomal subunit. Contacts proteins S5 and S12.

One of the primary rRNA binding proteins, it binds directly to 16S rRNA central domain where it helps coordinate assembly of the platform of the 30S subunit. The polypeptide is Small ribosomal subunit protein uS8 (Francisella philomiragia subsp. philomiragia (strain ATCC 25017 / CCUG 19701 / FSC 153 / O#319-036)).